The following is a 440-amino-acid chain: Ribosomal protein uS12 methylthiotransferase RimO (440 aa).

Residues 1–117 (MKIFFISLGC…ITEVIDKVLG (117 aa)) enclose the MTTase N-terminal domain. [4Fe-4S] cluster is bound by residues C10, C46, C80, C154, C158, and C161. A Radical SAM core domain is found at 140–370 (TTGGYYSFLK…MEIQQGIAFE (231 aa)). One can recognise a TRAM domain in the interval 373-440 (ESMVGRKLKV…KEYDLIGTAE (68 aa)).

Belongs to the methylthiotransferase family. RimO subfamily. [4Fe-4S] cluster is required as a cofactor.

The protein localises to the cytoplasm. The catalysed reaction is L-aspartate(89)-[ribosomal protein uS12]-hydrogen + (sulfur carrier)-SH + AH2 + 2 S-adenosyl-L-methionine = 3-methylsulfanyl-L-aspartate(89)-[ribosomal protein uS12]-hydrogen + (sulfur carrier)-H + 5'-deoxyadenosine + L-methionine + A + S-adenosyl-L-homocysteine + 2 H(+). Its function is as follows. Catalyzes the methylthiolation of an aspartic acid residue of ribosomal protein uS12. This chain is Ribosomal protein uS12 methylthiotransferase RimO, found in Lachnoclostridium phytofermentans (strain ATCC 700394 / DSM 18823 / ISDg) (Clostridium phytofermentans).